A 512-amino-acid chain; its full sequence is ATP synthase subunit alpha (512 aa).

ATP is bound at residue 169–176 (GDRQTGKT).

It belongs to the ATPase alpha/beta chains family. As to quaternary structure, F-type ATPases have 2 components, CF(1) - the catalytic core - and CF(0) - the membrane proton channel. CF(1) has five subunits: alpha(3), beta(3), gamma(1), delta(1), epsilon(1). CF(0) has three main subunits: a(1), b(2) and c(9-12). The alpha and beta chains form an alternating ring which encloses part of the gamma chain. CF(1) is attached to CF(0) by a central stalk formed by the gamma and epsilon chains, while a peripheral stalk is formed by the delta and b chains.

The protein localises to the cell inner membrane. The enzyme catalyses ATP + H2O + 4 H(+)(in) = ADP + phosphate + 5 H(+)(out). Its function is as follows. Produces ATP from ADP in the presence of a proton gradient across the membrane. The alpha chain is a regulatory subunit. In Rickettsia canadensis (strain McKiel), this protein is ATP synthase subunit alpha.